Here is a 77-residue protein sequence, read N- to C-terminus: UPF0346 protein LMOf2365_1885 (77 aa).

Belongs to the UPF0346 family.

The polypeptide is UPF0346 protein LMOf2365_1885 (Listeria monocytogenes serotype 4b (strain F2365)).